The sequence spans 335 residues: Glyceraldehyde-3-phosphate dehydrogenase 1 (335 aa).

NAD(+) contacts are provided by residues 12 to 13 (RI), D34, R78, and S120. D-glyceraldehyde 3-phosphate-binding positions include 151 to 153 (SCT) and T182. Residue C152 is the Nucleophile of the active site. An NAD(+)-binding site is contributed by N183. Residues R197, 210-211 (TG), and R233 each bind D-glyceraldehyde 3-phosphate. N315 provides a ligand contact to NAD(+).

This sequence belongs to the glyceraldehyde-3-phosphate dehydrogenase family. Homotetramer. Interacts with BrxC. In response to oxidative stress, the active site Cys likely reacts with bacillithiol (BSH) to form mixed disulfides to protect the Cys residue against overoxidation. S-bacillithiolation presumably leads to loss of catalytic activity. Debacillithiolation by monothiol bacilliredoxin BrxC restores the activity.

The protein localises to the cytoplasm. The enzyme catalyses D-glyceraldehyde 3-phosphate + phosphate + NAD(+) = (2R)-3-phospho-glyceroyl phosphate + NADH + H(+). The protein operates within carbohydrate degradation; glycolysis; pyruvate from D-glyceraldehyde 3-phosphate: step 1/5. Involved in the glycolysis. Catalyzes the oxidative phosphorylation of glyceraldehyde 3-phosphate (G3P) to 1,3-bisphosphoglycerate (BPG) using the cofactor NAD. The first reaction step involves the formation of a hemiacetal intermediate between G3P and a cysteine residue, and this hemiacetal intermediate is then oxidized to a thioester, with concomitant reduction of NAD to NADH. The reduced NADH is then exchanged with the second NAD, and the thioester is attacked by a nucleophilic inorganic phosphate to produce BPG. The polypeptide is Glyceraldehyde-3-phosphate dehydrogenase 1 (Bacillus subtilis (strain 168)).